The primary structure comprises 312 residues: Malate dehydrogenase (312 aa).

NAD(+) contacts are provided by residues 7–13 (GAAGGIG) and Asp34. Substrate-binding residues include Arg81 and Arg87. Residues Asn94 and 117 to 119 (ITN) contribute to the NAD(+) site. Asn119 and Arg153 together coordinate substrate. The active-site Proton acceptor is His177. Position 227 (Met227) interacts with NAD(+).

The protein belongs to the LDH/MDH superfamily. MDH type 1 family. Homodimer.

The enzyme catalyses (S)-malate + NAD(+) = oxaloacetate + NADH + H(+). Its function is as follows. Catalyzes the reversible oxidation of malate to oxaloacetate. The sequence is that of Malate dehydrogenase from Escherichia coli O7:K1 (strain IAI39 / ExPEC).